We begin with the raw amino-acid sequence, 346 residues long: 3-dehydroquinate synthase (346 aa).

NAD(+) contacts are provided by residues 62 to 67 (DGEQYK), 96 to 100 (GVISD), 120 to 121 (TT), lysine 133, and lysine 142. Glutamate 175, histidine 234, and histidine 251 together coordinate Zn(2+).

The protein belongs to the sugar phosphate cyclases superfamily. Dehydroquinate synthase family. Co(2+) is required as a cofactor. It depends on Zn(2+) as a cofactor. Requires NAD(+) as cofactor.

The protein resides in the cytoplasm. It catalyses the reaction 7-phospho-2-dehydro-3-deoxy-D-arabino-heptonate = 3-dehydroquinate + phosphate. It functions in the pathway metabolic intermediate biosynthesis; chorismate biosynthesis; chorismate from D-erythrose 4-phosphate and phosphoenolpyruvate: step 2/7. Functionally, catalyzes the conversion of 3-deoxy-D-arabino-heptulosonate 7-phosphate (DAHP) to dehydroquinate (DHQ). This chain is 3-dehydroquinate synthase, found in Campylobacter fetus subsp. fetus (strain 82-40).